Consider the following 111-residue polypeptide: uncharacterized protein (111 aa).

The interval 66-94 (PVPTATPSLPRSGFTSSAKKIKESRKQKS) is disordered. Polar residues predominate over residues 70-83 (ATPSLPRSGFTSSA).

It is found in the plastid. The protein localises to the chloroplast. This is an uncharacterized protein from Chlamydomonas reinhardtii (Chlamydomonas smithii).